A 422-amino-acid polypeptide reads, in one-letter code: F-box/FBD/LRR-repeat protein At5g56420 (422 aa).

The 50-residue stretch at 5 to 54 folds into the F-box domain; it reads RDRLSQLPDDFLLQILSWLPTKDVLVTSLLSKRWRFLWTLVPRLNYDLRL. 7 LRR repeats span residues 59–85, 136–163, 164–189, 193–212, 214–238, 279–304, and 305–330; these read CPRF…NIKI, VLKL…HLLD, VKYL…VVQR, DNVK…SLHK, SQAF…DIED, LCLI…ELCT, and CAPR…KLRQ. Positions 342–391 constitute an FBD domain; sequence SWKQPALPKCLLFHLETFKWELYEGSQKQKEVATFILKHAIRLKTAIISP.

The polypeptide is F-box/FBD/LRR-repeat protein At5g56420 (Arabidopsis thaliana (Mouse-ear cress)).